A 233-amino-acid polypeptide reads, in one-letter code: Hydroxyacylglutathione hydrolase (233 aa).

Positions 52, 54, 56, 57, 108, 125, and 163 each coordinate Zn(2+).

The protein belongs to the metallo-beta-lactamase superfamily. Glyoxalase II family. Monomer. Requires Zn(2+) as cofactor.

It catalyses the reaction an S-(2-hydroxyacyl)glutathione + H2O = a 2-hydroxy carboxylate + glutathione + H(+). It functions in the pathway secondary metabolite metabolism; methylglyoxal degradation; (R)-lactate from methylglyoxal: step 2/2. Functionally, thiolesterase that catalyzes the hydrolysis of S-D-lactoyl-glutathione to form glutathione and D-lactic acid. The sequence is that of Hydroxyacylglutathione hydrolase from Actinobacillus succinogenes (strain ATCC 55618 / DSM 22257 / CCUG 43843 / 130Z).